The chain runs to 590 residues: Selenoprotein N (590 aa).

Residues 1–26 (MGRARPGQRGPPSPGPAAQPPAPPRR) are disordered. A signal peptide spans 1-43 (MGRARPGQRGPPSPGPAAQPPAPPRRRARSLALLGALLAAAAA). The segment covering 9–23 (RGPPSPGPAAQPPAP) has biased composition (pro residues). The region spanning 67 to 102 (TLGTDGLFLFSSLDTDGDMYISPEEFKPIAEKLTGS) is the EF-hand domain. N-linked (GlcNAc...) asparagine glycosylation is present at Asn-126. Sec-127 is a non-standard amino acid (selenocysteine). An N-linked (GlcNAc...) asparagine glycan is attached at Asn-190. Sec-462 is a non-standard amino acid (selenocysteine). 3 N-linked (GlcNAc...) asparagine glycosylation sites follow: Asn-483, Asn-505, and Asn-531.

In terms of assembly, interacts with RYR1, RYR2 and RYR3. Post-translationally, N-glycosylated. In terms of tissue distribution, isoform 1 and isoform 2 are expressed in skeletal muscle, brain, lung and placenta. Isoform 2 is also expressed in heart, diaphragm and stomach.

It localises to the endoplasmic reticulum membrane. Functionally, plays an important role in cell protection against oxidative stress and in the regulation of redox-related calcium homeostasis. Regulates the calcium level of the ER by protecting the calcium pump ATP2A2 against the oxidoreductase ERO1A-mediated oxidative damage. Within the ER, ERO1A activity increases the concentration of H(2)O(2), which attacks the luminal thiols in ATP2A2 and thus leads to cysteinyl sulfenic acid formation (-SOH) and SEPN1 reduces the SOH back to free thiol (-SH), thus restoring ATP2A2 activity. Acts as a modulator of ryanodine receptor (RyR) activity: protects RyR from oxidation due to increased oxidative stress, or directly controls the RyR redox state, regulating the RyR-mediated calcium mobilization required for normal muscle development and differentiation. Its function is as follows. Essential for muscle regeneration and satellite cell maintenance in skeletal muscle. The sequence is that of Selenoprotein N from Homo sapiens (Human).